A 534-amino-acid chain; its full sequence is Cytochrome c oxidase subunit 1 (534 aa).

Residues 16–36 form a helical membrane-spanning segment; that stretch reads VLYFIFAIFCGMAGTAMSLII. Positions 39, 42, and 44 each coordinate Ca(2+). A run of 6 helical transmembrane segments spans residues 57–77, 101–121, 147–167, 182–202, 235–255, and 267–287; these read VLVV…ALIG, ISFW…LVES, AIFA…NFIV, LPLF…SLPV, LFWF…FGII, and VFGE…GFLV. Histidine 62 contributes to the Fe(II)-heme a binding site. Residue histidine 241 participates in Cu cation binding. The 1'-histidyl-3'-tyrosine (His-Tyr) cross-link spans 241–245; sequence HPEVY. Tyrosine 245 is an O2 binding site. The Cu cation site is built by histidine 290 and histidine 291. Helical transmembrane passes span 310-330 and 338-358; these read MIIA…IYGG and MLYA…GVAL. Mg(2+) is bound by residues histidine 368 and aspartate 369. 2 helical membrane passes run 372–392 and 412–432; these read YVVG…LFAG and IQFW…HFLG. Histidine 376 contributes to the heme a3 binding site. A Fe(II)-heme a-binding site is contributed by histidine 378. Proline 441 provides a ligand contact to Ca(2+). Residues 452–472 traverse the membrane as a helical segment; sequence YVASIGSIIAVFSLFLFIYIL.

This sequence belongs to the heme-copper respiratory oxidase family. In terms of assembly, component of the cytochrome c oxidase (complex IV, CIV), a multisubunit enzyme composed of a catalytic core of 3 subunits and several supernumerary subunits. The complex exists as a monomer or a dimer and forms supercomplexes (SCs) in the inner mitochondrial membrane with ubiquinol-cytochrome c oxidoreductase (cytochrome b-c1 complex, complex III, CIII). The cofactor is heme. Cu cation is required as a cofactor.

It is found in the mitochondrion inner membrane. The enzyme catalyses 4 Fe(II)-[cytochrome c] + O2 + 8 H(+)(in) = 4 Fe(III)-[cytochrome c] + 2 H2O + 4 H(+)(out). It participates in energy metabolism; oxidative phosphorylation. In terms of biological role, component of the cytochrome c oxidase, the last enzyme in the mitochondrial electron transport chain which drives oxidative phosphorylation. The respiratory chain contains 3 multisubunit complexes succinate dehydrogenase (complex II, CII), ubiquinol-cytochrome c oxidoreductase (cytochrome b-c1 complex, complex III, CIII) and cytochrome c oxidase (complex IV, CIV), that cooperate to transfer electrons derived from NADH and succinate to molecular oxygen, creating an electrochemical gradient over the inner membrane that drives transmembrane transport and the ATP synthase. Cytochrome c oxidase is the component of the respiratory chain that catalyzes the reduction of oxygen to water. Electrons originating from reduced cytochrome c in the intermembrane space (IMS) are transferred via the dinuclear copper A center (CU(A)) of subunit 2 and heme A of subunit 1 to the active site in subunit 1, a binuclear center (BNC) formed by heme A3 and copper B (CU(B)). The BNC reduces molecular oxygen to 2 water molecules using 4 electrons from cytochrome c in the IMS and 4 protons from the mitochondrial matrix. This Kluyveromyces lactis (strain ATCC 8585 / CBS 2359 / DSM 70799 / NBRC 1267 / NRRL Y-1140 / WM37) (Yeast) protein is Cytochrome c oxidase subunit 1 (COX1).